A 566-amino-acid chain; its full sequence is Mitochondrial distribution and morphology protein 34 (566 aa).

Residues 1-195 (MAFNFNWSPL…LPAIIHRLSL (195 aa)) enclose the SMP-LTD domain. Disordered regions lie at residues 212–237 (PEQT…DSLG), 349–401 (GYGL…NPSV), 432–518 (PERR…SSST), and 539–566 (KLMP…AYGQ). The segment covering 358 to 370 (RHSKAHSRKRKKR) has biased composition (basic residues). Residues 380 to 401 (TSDTASVSDESAYTETASNPSV) show a composition bias toward polar residues. A compositionally biased stretch (basic and acidic residues) spans 444-454 (PRRDIATEMLR).

It belongs to the MDM34 family. In terms of assembly, component of the ER-mitochondria encounter structure (ERMES) or MDM complex, composed of mmm1, mdm10, mdm12 and mdm34.

It is found in the mitochondrion outer membrane. Functionally, component of the ERMES/MDM complex, which serves as a molecular tether to connect the endoplasmic reticulum (ER) and mitochondria. Components of this complex are involved in the control of mitochondrial shape and protein biogenesis, and function in nonvesicular lipid trafficking between the ER and mitochondria. Mdm34 is required for the interaction of the ER-resident membrane protein mmm1 and the outer mitochondrial membrane-resident beta-barrel protein mdm10. The polypeptide is Mitochondrial distribution and morphology protein 34 (Aspergillus flavus (strain ATCC 200026 / FGSC A1120 / IAM 13836 / NRRL 3357 / JCM 12722 / SRRC 167)).